A 359-amino-acid chain; its full sequence is N-acetyl-gamma-glutamyl-phosphate reductase (359 aa).

Residue Cys162 is part of the active site.

This sequence belongs to the NAGSA dehydrogenase family. Type 1 subfamily.

The protein resides in the cytoplasm. It carries out the reaction N-acetyl-L-glutamate 5-semialdehyde + phosphate + NADP(+) = N-acetyl-L-glutamyl 5-phosphate + NADPH + H(+). It participates in amino-acid biosynthesis; L-arginine biosynthesis; N(2)-acetyl-L-ornithine from L-glutamate: step 3/4. Functionally, catalyzes the NADPH-dependent reduction of N-acetyl-5-glutamyl phosphate to yield N-acetyl-L-glutamate 5-semialdehyde. This Prochlorococcus marinus (strain SARG / CCMP1375 / SS120) protein is N-acetyl-gamma-glutamyl-phosphate reductase.